The chain runs to 394 residues: DNA replication and repair protein RecF (394 aa).

30–37 (GRNGFGKT) is a binding site for ATP.

The protein belongs to the RecF family.

The protein localises to the cytoplasm. In terms of biological role, the RecF protein is involved in DNA metabolism; it is required for DNA replication and normal SOS inducibility. RecF binds preferentially to single-stranded, linear DNA. It also seems to bind ATP. The protein is DNA replication and repair protein RecF of Corynebacterium glutamicum (strain ATCC 13032 / DSM 20300 / JCM 1318 / BCRC 11384 / CCUG 27702 / LMG 3730 / NBRC 12168 / NCIMB 10025 / NRRL B-2784 / 534).